Reading from the N-terminus, the 97-residue chain is MKVQVDEELMRKLEKLALISLTDQERQEFMRDLTKILDFFNKIDELNLEGVEPMFHPLSTGKLRPDEPAQPLSRDDALANVPKKKDGYIIGPSTIGG.

Positions 59-78 (STGKLRPDEPAQPLSRDDAL) are disordered. Over residues 63–78 (LRPDEPAQPLSRDDAL) the composition is skewed to basic and acidic residues.

This sequence belongs to the GatC family. In terms of assembly, heterotrimer of A, B and C subunits.

The catalysed reaction is L-glutamyl-tRNA(Gln) + L-glutamine + ATP + H2O = L-glutaminyl-tRNA(Gln) + L-glutamate + ADP + phosphate + H(+). It catalyses the reaction L-aspartyl-tRNA(Asn) + L-glutamine + ATP + H2O = L-asparaginyl-tRNA(Asn) + L-glutamate + ADP + phosphate + 2 H(+). Its function is as follows. Allows the formation of correctly charged Asn-tRNA(Asn) or Gln-tRNA(Gln) through the transamidation of misacylated Asp-tRNA(Asn) or Glu-tRNA(Gln) in organisms which lack either or both of asparaginyl-tRNA or glutaminyl-tRNA synthetases. The reaction takes place in the presence of glutamine and ATP through an activated phospho-Asp-tRNA(Asn) or phospho-Glu-tRNA(Gln). The sequence is that of Aspartyl/glutamyl-tRNA(Asn/Gln) amidotransferase subunit C from Metallosphaera sedula (strain ATCC 51363 / DSM 5348 / JCM 9185 / NBRC 15509 / TH2).